The following is a 279-amino-acid chain: NADPH-dependent 7-cyano-7-deazaguanine reductase (279 aa).

86-88 contributes to the substrate binding site; sequence IES. NADPH is bound at residue 88–89; the sequence is SK. The Thioimide intermediate role is filled by Cys-187. Catalysis depends on Asp-194, which acts as the Proton donor. Substrate is bound at residue 226–227; the sequence is HE. 255–256 contacts NADPH; sequence RG.

This sequence belongs to the GTP cyclohydrolase I family. QueF type 2 subfamily. In terms of assembly, homodimer.

The protein resides in the cytoplasm. It carries out the reaction 7-aminomethyl-7-carbaguanine + 2 NADP(+) = 7-cyano-7-deazaguanine + 2 NADPH + 3 H(+). The protein operates within tRNA modification; tRNA-queuosine biosynthesis. Catalyzes the NADPH-dependent reduction of 7-cyano-7-deazaguanine (preQ0) to 7-aminomethyl-7-deazaguanine (preQ1). The sequence is that of NADPH-dependent 7-cyano-7-deazaguanine reductase from Actinobacillus pleuropneumoniae serotype 5b (strain L20).